A 431-amino-acid chain; its full sequence is Glucose-1-phosphate adenylyltransferase (431 aa).

K39 lines the beta-D-fructose 1,6-bisphosphate pocket. R40, H46, and R52 together coordinate AMP. Y114 is a binding site for alpha-D-glucose 1-phosphate. AMP is bound at residue R130. Residues G179, 194–195, and S212 each bind alpha-D-glucose 1-phosphate; that span reads EK. The AMP site is built by E370 and R386. Beta-D-fructose 1,6-bisphosphate-binding positions include 419-423 and 429-431; these read REMLR and QER.

Belongs to the bacterial/plant glucose-1-phosphate adenylyltransferase family. As to quaternary structure, homotetramer.

It catalyses the reaction alpha-D-glucose 1-phosphate + ATP + H(+) = ADP-alpha-D-glucose + diphosphate. It functions in the pathway glycan biosynthesis; glycogen biosynthesis. With respect to regulation, allosterically activated by fructose-1,6-bisphosphate (F16BP) and inhibited by AMP. Its function is as follows. Involved in the biosynthesis of ADP-glucose, a building block required for the elongation reactions to produce glycogen. Catalyzes the reaction between ATP and alpha-D-glucose 1-phosphate (G1P) to produce pyrophosphate and ADP-Glc. The protein is Glucose-1-phosphate adenylyltransferase of Escherichia coli O127:H6 (strain E2348/69 / EPEC).